Reading from the N-terminus, the 190-residue chain is uncharacterized protein (190 aa).

The N-terminal stretch at 1 to 18 is a signal peptide; that stretch reads MKLVHMASGLAVAIALAA. A lipid anchor (N-palmitoyl cysteine) is attached at Cys19. Cys19 carries the S-diacylglycerol cysteine lipid modification. The span at 162–182 shows a compositional bias: low complexity; sequence ASGGATTTVPSTSPTQVNPSS. Residues 162-190 form a disordered region; that stretch reads ASGGATTTVPSTSPTQVNPSSAVPAPTQY.

The protein localises to the cell membrane. This is an uncharacterized protein from Escherichia coli (strain K12).